A 329-amino-acid chain; its full sequence is MASQLTDVFARKFYYLRLSITDVCNFRCTYCLPDGYKPSGVTNKGFLTVDEIRRVTRAFASLGTEKVRLTGGEPSLRRDFTDIIAAVRENDAIRQIAVTTNGYRLERDVANWRDAGLTGINVSVDSLDARQFHAITGQDKFNQVMAGIDAAFEAGFEKVKVNTVLMRDVNHHQLDTFLNWIQHRPIQLRFIELMETGEGSELFRKHHISGQVLRDELLRRGWIHQLRQRSDGPAQVFCHPDYAGEIGLIMPYEKDFCATCNRLRVSSIGKLHLCLFGEGGVNLRDLLEGDTQQQALEARISAALREKKQTHFLHQNNTGITQNLSYIGG.

The 227-residue stretch at Val-8–Ala-234 folds into the Radical SAM core domain. Arg-17 lines the GTP pocket. 2 residues coordinate [4Fe-4S] cluster: Cys-24 and Cys-28. An S-adenosyl-L-methionine-binding site is contributed by Tyr-30. Cys-31 contacts [4Fe-4S] cluster. Arg-68 provides a ligand contact to GTP. Residue Gly-72 participates in S-adenosyl-L-methionine binding. Thr-99 lines the GTP pocket. Ser-123 contributes to the S-adenosyl-L-methionine binding site. A GTP-binding site is contributed by Lys-160. Residue Met-194 participates in S-adenosyl-L-methionine binding. 2 residues coordinate [4Fe-4S] cluster: Cys-257 and Cys-260. Arg-262 to Arg-264 provides a ligand contact to GTP. Cys-274 contributes to the [4Fe-4S] cluster binding site.

This sequence belongs to the radical SAM superfamily. MoaA family. In terms of assembly, monomer and homodimer. [4Fe-4S] cluster serves as cofactor.

The catalysed reaction is GTP + AH2 + S-adenosyl-L-methionine = (8S)-3',8-cyclo-7,8-dihydroguanosine 5'-triphosphate + 5'-deoxyadenosine + L-methionine + A + H(+). It participates in cofactor biosynthesis; molybdopterin biosynthesis. Catalyzes the cyclization of GTP to (8S)-3',8-cyclo-7,8-dihydroguanosine 5'-triphosphate. This Shigella flexneri protein is GTP 3',8-cyclase.